We begin with the raw amino-acid sequence, 624 residues long: Protein POLLEN DEFECTIVE IN GUIDANCE 1 (624 aa).

The interval 20 to 63 is disordered; sequence SFENDDTSIRRSSSDPITGNVASESPRDYGKRKRSKKKKKKVNQ. Residues 33-42 are compositionally biased toward polar residues; the sequence is SDPITGNVAS. The segment covering 49 to 61 has biased composition (basic residues); the sequence is GKRKRSKKKKKKV. The next 6 membrane-spanning stretches (helical) occupy residues 263-283, 305-325, 391-411, 413-433, 545-565, and 578-598; these read VLID…LTVM, ASEL…ILLG, FVSD…ILLA, AITL…LLVS, LTFV…PVYA, and LWMV…KVLI.

Belongs to the TAPT1 family. As to quaternary structure, interacts with CRT3, but not with CRT1 or CNX. As to expression, expressed in inflorescences, siliques, roots and shoots. Expressed in early embryo, endosperm, mature pollen and pollen tubes, synergide cells and weakly in antipodal cells.

The protein resides in the membrane. The protein localises to the endoplasmic reticulum lumen. Its function is as follows. Probable component of the calreticulin 3 (CRT3) complex, acting probably as a co-chaperone involved in protein retention in the endoplasmic reticulum lumen. Required for micropylar pollen tube guidance. Plays an essential role in cell plate orientation or positioning in early embryo patterning. This is Protein POLLEN DEFECTIVE IN GUIDANCE 1 (POD1) from Arabidopsis thaliana (Mouse-ear cress).